The chain runs to 456 residues: Exodeoxyribonuclease 7 large subunit (456 aa).

The protein belongs to the XseA family. Heterooligomer composed of large and small subunits.

The protein localises to the cytoplasm. It catalyses the reaction Exonucleolytic cleavage in either 5'- to 3'- or 3'- to 5'-direction to yield nucleoside 5'-phosphates.. Bidirectionally degrades single-stranded DNA into large acid-insoluble oligonucleotides, which are then degraded further into small acid-soluble oligonucleotides. This chain is Exodeoxyribonuclease 7 large subunit, found in Lactobacillus delbrueckii subsp. bulgaricus (strain ATCC 11842 / DSM 20081 / BCRC 10696 / JCM 1002 / NBRC 13953 / NCIMB 11778 / NCTC 12712 / WDCM 00102 / Lb 14).